Consider the following 85-residue polypeptide: Large ribosomal subunit protein bL31B (85 aa).

It belongs to the bacterial ribosomal protein bL31 family. Type B subfamily. In terms of assembly, part of the 50S ribosomal subunit.

The chain is Large ribosomal subunit protein bL31B from Micrococcus luteus (strain ATCC 4698 / DSM 20030 / JCM 1464 / CCM 169 / CCUG 5858 / IAM 1056 / NBRC 3333 / NCIMB 9278 / NCTC 2665 / VKM Ac-2230) (Micrococcus lysodeikticus).